We begin with the raw amino-acid sequence, 699 residues long: Protein phosphatase 1 regulatory subunit 37 (699 aa).

Residues 1-12 (MEIPPQEAPPGP) show a composition bias toward pro residues. The disordered stretch occupies residues 1-42 (MEIPPQEAPPGPGADGEAEEAPVEAPSPGPASPPADGRLKAA). Phosphoserine is present on residues Ser-50 and Ser-56. LRR repeat units follow at residues 220 to 240 (SLAV…MLLA), 248 to 269 (TLRE…AQLG), 277 to 297 (SLQI…AYIC), 306 to 326 (GLAT…AFLG), and 334 to 354 (SLET…RNLK). Positions 467-667 (RLQLSASMPE…PPGPEAKVGS (201 aa)) are disordered. Positions 510 to 525 (SDSDSDSEGEDRDEAD) are enriched in acidic residues. Residue Ser-566 is modified to Phosphoserine. Composition is skewed to pro residues over residues 588–613 (PPVP…PFPT) and 622–642 (DPGP…PPLP).

The protein belongs to the PPP1R37 family. As to quaternary structure, interacts with PPP1CA.

Functionally, inhibits phosphatase activity of protein phosphatase 1 (PP1) complexes. This Bos taurus (Bovine) protein is Protein phosphatase 1 regulatory subunit 37 (PPP1R37).